The chain runs to 217 residues: MEAIAKYDFKATADDELSFKRGDILKVLNEECDQNWYKAELNGKDGFIPKNYIEMKPHPWFFGKIPRAKAEEMLSKQRHDGAFLIRESESAPGDFSLSVKFGNDVQHFKVLRDGAGKYFLWVVKFNSLNELVDYHRSTSVSRNQQIFLRDIEQMPQQPTYVQALFDFDPQEDGELGFRRGDFIHVMDNSDPNWWKGACHGQTGMFPRNYVTPVNRNV.

Residue Met-1 is modified to N-acetylmethionine. The 58-residue stretch at 1-58 (MEAIAKYDFKATADDELSFKRGDILKVLNEECDQNWYKAELNGKDGFIPKNYIEMKPH) folds into the SH3 1 domain. Residues Lys-6, Lys-50, and Lys-109 each carry the N6-acetyllysine modification. The 93-residue stretch at 60–152 (WFFGKIPRAK…NQQIFLRDIE (93 aa)) folds into the SH2 domain. Lys-109 is covalently cross-linked (Glycyl lysine isopeptide (Lys-Gly) (interchain with G-Cter in ubiquitin)). The region spanning 156–215 (QQPTYVQALFDFDPQEDGELGFRRGDFIHVMDNSDPNWWKGACHGQTGMFPRNYVTPVNR) is the SH3 2 domain. Tyr-209 is modified (phosphotyrosine). A Phosphothreonine modification is found at Thr-211.

This sequence belongs to the GRB2/sem-5/DRK family. In terms of assembly, associates (via SH2 domain) with activated EGF and PDGF receptors (tyrosine phosphorylated). Interacts with PDGFRA (tyrosine phosphorylated); the interaction may be indirect. Interacts with IRS4 (when Tyr-phosphorylated). Also associates to other cellular Tyr-phosphorylated proteins such as SIT1, IRS1, IRS2, SHC and LNK; probably via the concerted action of both its SH2 and SH3 domains. It also seems to interact with RAS in the signaling pathway leading to DNA synthesis. Interacts with SOS1. Forms a complex with MUC1 and SOS1, through interaction of the SH3 domains with SOS1 and the SH2 domain with phosphorylated MUC1. Interacts with phosphorylated MET. Interacts with phosphorylated TOM1L1. Interacts with the phosphorylated C-terminus of SH2B2. Interacts with phosphorylated SIT1, LAX1, LAT, LAT2 and LIME1 upon TCR and/or BCR activation. Interacts with NISCH, PTPNS1 and REPS2. Interacts with syntrophin SNTA1. Interacts (via SH3 domains) with REPS1. Interacts (via SH3 domains) with PIK3C2B. Interacts with CBL and CBLB. Interacts with AJUBA and CLNK. Interacts (via SH2 domain) with TEK/TIE2 (tyrosine phosphorylated). Interacts with SHB, INPP5D/SHIP1, SKAP1 and SKAP2. Interacts with PTPN11. Interacts with PRNP. Interacts with RALGPS1. Also interacts with HCST. Interacts with KDR. Interacts with FLT1 (tyrosine-phosphorylated). Interacts with GAPT and PTPRE. Interacts (via SH2 domain) with KIF26A. Interacts (via SH3 2) with GAB2. Interacts with ADAM15. Interacts with THEMIS2. Interacts (via SH2 domain) with AXL (phosphorylated). Interacts (via SH2 domain) with KIT (phosphorylated). Interacts with PTPRJ and BCR. Interacts with PTPN23. Interacts with FLT4 (tyrosine phosphorylated). Interacts with EPHB1 and SHC1; activates the MAPK/ERK cascade to regulate cell migration. Part of a complex including TNK2, GRB2 and one receptor tyrosine kinase (RTK) such as AXL and PDGFRL, in which GRB2 promotes RTK recruitment by TNK2. Interacts (via SH2 domain) with CSF1R (tyrosine phosphorylated). Interacts with ERBB4. Interacts with NTRK1 (phosphorylated upon ligand-binding). Interacts with PTK2/FAK1 (tyrosine phosphorylated). Interacts with PTK2B/PYK2 (tyrosine phosphorylated). Interacts (via SH2-domain) with SCIMP; this interaction is dependent on phosphorylation of SCIMP 'Tyr-58'. Interacts (via SH3 domains) with GAREM1 (via proline-rich domain and tyrosine phosphorylated); the interaction occurs upon EGF stimulation. Interacts with DAB2. Interacts with TESPA1. Interacts with THEMIS. Interacts with PLCG1, LAT and THEMIS upon TCR activation in thymocytes; the association is weaker in the absence of TESPA1. Interacts with CD28. Interacts with RAB13; may recruit RAB13 to the leading edge of migrating endothelial cells where it can activate RHOA. Interacts with ASAP3 (phosphorylated form). Interacts (via SH2 domain) with PTPRH (phosphorylated form). Interacts with PTPRO (phosphorylated form). Interacts with PTPRB (phosphorylated form). Interacts (via SH3 domain 2) with PRR14 (via proline-rich region). Interacts with DENND2B. Interacts with SPRY2. Interacts with LRRC8A. Interacts with PEAK1. Interacts with FCRL1. Interacts with PCNA. Interacts with CD19. Interacts with BECN1. Interacts with RAD51; the interaction inhibits RAD51 ATPase to stabilize RAD51-DNA complex at stalled replication forks. Interacts with MRE11; this interaction recruits MRE11 to the DNA damage sites. Interacts with RIPK1 ans SQSTM1; these interactions play a critical role in regulating programmed necrosis. Interacts with AGO2; this interaction is important for the formation of a ternary complex containing GRB2, AGO2 and DICER1. Interacts with TIGIT; this interaction inhibits PI3K and MAPK signaling cascades. Interacts with CD226; this interaction leads to activation of VAV1, PI3K and PLCG1. As to quaternary structure, interacts with SOS1; this interaction competes with GRB2 to bind SOS1 via its N-terminal SH3 domain. Phosphorylation of Tyr-209 in the C-terminal SH3 domain reduces its binding to SOS1. In terms of processing, ubiquitinated by RNF173, leading to proteasomal degradation and inhibition of the RAF/MEK/ERK pathway. In the nucleus, polyubiquitinated by RBBP6 at Lys-109 at DNA damage sites. In terms of tissue distribution, expressed in macrophages.

The protein resides in the nucleus. Its subcellular location is the cytoplasm. It is found in the endosome. The protein localises to the golgi apparatus. Functionally, non-enzymatic adapter protein that plays a pivotal role in precisely regulated signaling cascades from cell surface receptors to cellular responses, including signaling transduction and gene expression. Thus, participates in many biological processes including regulation of innate and adaptive immunity, autophagy, DNA repair or necroptosis. Controls signaling complexes at the T-cell antigen receptor to facilitate the activation, differentiation, and function of T-cells. Mechanistically, engagement of the TCR leads to phosphorylation of the adapter protein LAT, which serves as docking site for GRB2. In turn, GRB2 establishes a a connection with SOS1 that acts as a guanine nucleotide exchange factor and serves as a critical regulator of KRAS/RAF1 leading to MAPKs translocation to the nucleus and activation. Also functions a role in B-cell activation by amplifying Ca(2+) mobilization and activation of the ERK MAP kinase pathway upon recruitment to the phosphorylated B-cell antigen receptor (BCR). Plays a role in switching between autophagy and programmed necrosis upstream of EGFR by interacting with components of necrosomes including RIPK1 and with autophagy regulators SQSTM1 and BECN1. Regulates miRNA biogenesis by forming a functional ternary complex with AGO2 and DICER1. Functions in the replication stress response by protecting DNA at stalled replication forks from MRE11-mediated degradation. Mechanistically, inhibits RAD51 ATPase activity to stabilize RAD51 on stalled replication forks. Additionally, directly recruits and later releases MRE11 at DNA damage sites during the homology-directed repair (HDR) process. Its function is as follows. Does not bind to phosphorylated epidermal growth factor receptor (EGFR) but inhibits EGF-induced transactivation of a RAS-responsive element. Acts as a dominant negative protein over GRB2 and by suppressing proliferative signals, may trigger active programmed cell death. Mechanistically, inhibits RAS-ERK signaling and downstream cell proliferation by competing with GRB2 for SOS1 binding and thus by regulating SOS1 membrane recruitment. This Mus musculus (Mouse) protein is Growth factor receptor-bound protein 2 (Grb2).